We begin with the raw amino-acid sequence, 280 residues long: Bifunctional protein FolD (280 aa).

NADP(+) contacts are provided by residues 159–161 (GRS), Ser184, and Ile225.

Belongs to the tetrahydrofolate dehydrogenase/cyclohydrolase family. In terms of assembly, homodimer.

The enzyme catalyses (6R)-5,10-methylene-5,6,7,8-tetrahydrofolate + NADP(+) = (6R)-5,10-methenyltetrahydrofolate + NADPH. The catalysed reaction is (6R)-5,10-methenyltetrahydrofolate + H2O = (6R)-10-formyltetrahydrofolate + H(+). It functions in the pathway one-carbon metabolism; tetrahydrofolate interconversion. In terms of biological role, catalyzes the oxidation of 5,10-methylenetetrahydrofolate to 5,10-methenyltetrahydrofolate and then the hydrolysis of 5,10-methenyltetrahydrofolate to 10-formyltetrahydrofolate. The chain is Bifunctional protein FolD from Methanosphaerula palustris (strain ATCC BAA-1556 / DSM 19958 / E1-9c).